The chain runs to 568 residues: Oxygen-dependent choline dehydrogenase (568 aa).

8–37 (DYIIIGAGSAGNTLAARLTEDAGVTVLLLE) contributes to the FAD binding site. Histidine 477 acts as the Proton acceptor in catalysis.

It belongs to the GMC oxidoreductase family. FAD is required as a cofactor.

The catalysed reaction is choline + A = betaine aldehyde + AH2. The enzyme catalyses betaine aldehyde + NAD(+) + H2O = glycine betaine + NADH + 2 H(+). Its pathway is amine and polyamine biosynthesis; betaine biosynthesis via choline pathway; betaine aldehyde from choline (cytochrome c reductase route): step 1/1. In terms of biological role, involved in the biosynthesis of the osmoprotectant glycine betaine. Catalyzes the oxidation of choline to betaine aldehyde and betaine aldehyde to glycine betaine at the same rate. This Pseudomonas savastanoi pv. phaseolicola (strain 1448A / Race 6) (Pseudomonas syringae pv. phaseolicola (strain 1448A / Race 6)) protein is Oxygen-dependent choline dehydrogenase.